Consider the following 595-residue polypeptide: E3 ubiquitin-protein ligase synoviolin B (595 aa).

The chain crosses the membrane as a helical span at residues 1 to 19 (MTGASLALTASVVAHAYYL). Over 20 to 35 (KNQFYPTVVYLTKSSP) the chain is Lumenal. Residues 36 to 56 (SMAILYIQAFVLVFLLGKFMG) form a helical membrane-spanning segment. Topologically, residues 57–92 (KVFFGQLRAAEMEHLLERSWYAVTETCLAFTVFRDD) are cytoplasmic. The chain crosses the membrane as a helical span at residues 93 to 113 (FSPRFVALFTLLLFLKCFHWL). Residues 114-129 (AEDRVDFMERSPNISW) lie on the Lumenal side of the membrane. A helical transmembrane segment spans residues 130–150 (LFHFRILALMLLLGVLDAFFV). Residues 151 to 163 (SHAYNSLVTRGAS) are Cytoplasmic-facing. A helical membrane pass occupies residues 164 to 184 (VQLVFGFEYAILMTMILAVFI). Over 185–218 (KYILHSVDLQSENPWDNKAVYMLYTELFTGFIKV) the chain is Lumenal. Residues 219–239 (LLYMAFMTIMVKVHTFPLFAI) traverse the membrane as a helical segment. Residues 230–264 (KVHTFPLFAIRPMYLAMRQFKKAVTDAVMSRRAIR) are interaction with p53/TP53. Residues 240 to 595 (RPMYLAMRQF…LQKLETTDSQ (356 aa)) lie on the Cytoplasmic side of the membrane. Positions 285, 288, 301, 303, 306, 309, 320, and 323 each coordinate Zn(2+). The RING-type; atypical zinc-finger motif lies at 285–324 (CIICREEMVSGAKRLPCNHIFHTSCLRSWFQRQQTCPTCR). Positions 335–353 (QPQTPAEQQNQHQAQQQPT) are enriched in low complexity. 2 disordered regions span residues 335 to 370 (QPQT…LPPF) and 386 to 426 (PVPG…PGAA). Residues 354 to 370 (PVVPPQPNFPPGMLPPF) show a composition bias toward pro residues. The segment covering 390-408 (APVGNPPDEANPGSSSGSS) has biased composition (low complexity). The stretch at 463 to 494 (EELRAMEGHERQNLEARLQCLQNIHTLLDAAM) forms a coiled coil. The disordered stretch occupies residues 509 to 595 (PPQPPVSSSS…LQKLETTDSQ (87 aa)). Residues 514-552 (VSSSSSSSASASTEPTTSSVSEPVIDTSSIVTTDSSQQS) show a composition bias toward low complexity.

This sequence belongs to the HRD1 family. Homodimer.

Its subcellular location is the endoplasmic reticulum membrane. It carries out the reaction S-ubiquitinyl-[E2 ubiquitin-conjugating enzyme]-L-cysteine + [acceptor protein]-L-lysine = [E2 ubiquitin-conjugating enzyme]-L-cysteine + N(6)-ubiquitinyl-[acceptor protein]-L-lysine.. Its pathway is protein modification; protein ubiquitination. Its function is as follows. E3 ubiquitin-protein ligase which accepts ubiquitin specifically from endoplasmic reticulum-associated UBC7 E2 ligase and transfers it to substrates, promoting their degradation. Component of the endoplasmic reticulum quality control (ERQC) system also called ER-associated degradation (ERAD) involved in ubiquitin-dependent degradation of misfolded endoplasmic reticulum proteins. Also promotes the degradation of normal but naturally short-lived proteins. Protects cells from ER stress-induced apoptosis. Sequesters p53 in the cytoplasm and promotes its degradation, thereby negatively regulating its biological function in transcription, cell cycle regulation and apoptosis. The sequence is that of E3 ubiquitin-protein ligase synoviolin B (syvn1-b) from Xenopus laevis (African clawed frog).